The following is a 437-amino-acid chain: Protein translocase subunit SecY (437 aa).

The next 10 membrane-spanning stretches (helical) occupy residues 19–39 (LFTLAIIVVYRVGTHIPIPGV), 69–89 (LLQITIFALGIMPYITASIIL), 122–142 (VALAILQGTGLVATARSAPLF), 157–177 (IFTTITMVICMTAGTCVVMWL), 189–209 (GMSILMFISIAATFPSALWAI), 219–239 (WIEFGTVIAVGLIMVALVVFV), 276–296 (VIPVIFASSLLYIPALVAQFA), 316–336 (PIYIVTYFLLIVFFAFFYVAI), 378–398 (GSLYLGLIALVPTMALVGFGA), and 400–420 (QNFPFGGTSILIIVGVGLETV).

The protein belongs to the SecY/SEC61-alpha family. Component of the Sec protein translocase complex. Heterotrimer consisting of SecY, SecE and SecG subunits. The heterotrimers can form oligomers, although 1 heterotrimer is thought to be able to translocate proteins. Interacts with the ribosome. Interacts with SecDF, and other proteins may be involved. Interacts with SecA.

It localises to the cell membrane. Functionally, the central subunit of the protein translocation channel SecYEG. Consists of two halves formed by TMs 1-5 and 6-10. These two domains form a lateral gate at the front which open onto the bilayer between TMs 2 and 7, and are clamped together by SecE at the back. The channel is closed by both a pore ring composed of hydrophobic SecY resides and a short helix (helix 2A) on the extracellular side of the membrane which forms a plug. The plug probably moves laterally to allow the channel to open. The ring and the pore may move independently. The sequence is that of Protein translocase subunit SecY from Streptomyces galbus.